Here is a 240-residue protein sequence, read N- to C-terminus: Methylthioribulose-1-phosphate dehydratase (240 aa).

Substrate is bound at residue cysteine 99. The Zn(2+) site is built by histidine 116 and histidine 118. Residue glutamate 145 is the Proton donor/acceptor of the active site. A Zn(2+)-binding site is contributed by histidine 201.

It belongs to the aldolase class II family. MtnB subfamily. It depends on Zn(2+) as a cofactor.

The protein resides in the cytoplasm. It catalyses the reaction 5-(methylsulfanyl)-D-ribulose 1-phosphate = 5-methylsulfanyl-2,3-dioxopentyl phosphate + H2O. The protein operates within amino-acid biosynthesis; L-methionine biosynthesis via salvage pathway; L-methionine from S-methyl-5-thio-alpha-D-ribose 1-phosphate: step 2/6. In terms of biological role, catalyzes the dehydration of methylthioribulose-1-phosphate (MTRu-1-P) into 2,3-diketo-5-methylthiopentyl-1-phosphate (DK-MTP-1-P). The sequence is that of Methylthioribulose-1-phosphate dehydratase from Paracoccidioides brasiliensis (strain Pb03).